Reading from the N-terminus, the 127-residue chain is EF-hand calcium-binding domain-containing protein 10 (127 aa).

Positions 63–98 constitute an EF-hand domain; that stretch reads MDNSNIVAMFEMMDSSGRGTISFVQYKEALKTLGLC.

The chain is EF-hand calcium-binding domain-containing protein 10 (EFCAB10) from Homo sapiens (Human).